A 240-amino-acid polypeptide reads, in one-letter code: Uridylate kinase (240 aa).

Residue 13-16 (KASG) coordinates ATP. An involved in allosteric activation by GTP region spans residues 21–26 (GSQGFG). Gly-55 lines the UMP pocket. Gly-56 and Arg-60 together coordinate ATP. UMP-binding positions include Asp-75 and 136-143 (TGNPFFTT). Residues Thr-163, Gln-164, Tyr-169, and Asp-172 each coordinate ATP.

The protein belongs to the UMP kinase family. As to quaternary structure, homohexamer.

The protein resides in the cytoplasm. It catalyses the reaction UMP + ATP = UDP + ADP. It functions in the pathway pyrimidine metabolism; CTP biosynthesis via de novo pathway; UDP from UMP (UMPK route): step 1/1. Allosterically activated by GTP. Inhibited by UTP. Functionally, catalyzes the reversible phosphorylation of UMP to UDP. The protein is Uridylate kinase of Sinorhizobium medicae (strain WSM419) (Ensifer medicae).